We begin with the raw amino-acid sequence, 499 residues long: Probable cytosol aminopeptidase (499 aa).

Positions 264 and 269 each coordinate Mn(2+). Lys-276 is a catalytic residue. Residues Asp-287, Asp-346, and Glu-348 each contribute to the Mn(2+) site. The active site involves Arg-350.

The protein belongs to the peptidase M17 family. Mn(2+) serves as cofactor.

The protein resides in the cytoplasm. It carries out the reaction Release of an N-terminal amino acid, Xaa-|-Yaa-, in which Xaa is preferably Leu, but may be other amino acids including Pro although not Arg or Lys, and Yaa may be Pro. Amino acid amides and methyl esters are also readily hydrolyzed, but rates on arylamides are exceedingly low.. The catalysed reaction is Release of an N-terminal amino acid, preferentially leucine, but not glutamic or aspartic acids.. Presumably involved in the processing and regular turnover of intracellular proteins. Catalyzes the removal of unsubstituted N-terminal amino acids from various peptides. The polypeptide is Probable cytosol aminopeptidase (Rhodopseudomonas palustris (strain BisB18)).